A 951-amino-acid polypeptide reads, in one-letter code: Serine/threonine-protein phosphatase 4 regulatory subunit 1 (951 aa).

7 HEAT repeats span residues 26–63, 82–119, 127–164, 168–206, 208–246, 248–285, and 287–324; these read ESDV…VFNR, RDCI…FCQE, AFSK…QELI, DVET…MVGK, ITER…VVGQ, ATEE…ATCQ, and IRRT…TFAN. Disordered regions lie at residues 326–395, 407–501, 539–569, and 592–612; these read SSSG…DMRV, SESP…MATR, HDEA…SISE, and GGAD…ERRP. Basic and acidic residues-rich tracts occupy residues 332–360, 464–483, and 539–551; these read FKDE…RPED, DLDK…ERTG, and HDEA…RSEL. Residues 502-539 form an HEAT 8 repeat; sequence KELEEMIENLEPHMDDPDVKAQVEVLSAALRASTLDAH. A compositionally biased stretch (gly residues) spans 594–604; that stretch reads ADVGPGGGGGF. HEAT repeat units lie at residues 699–735, 777–815, 820–858, and 862–899; these read LTAA…LLHI, RDVY…KLHM, TFGV…DDCL, and QFAV…EKEY. At S936 the chain carries Phosphoserine.

Serine/threonine-protein phosphatase 4 (PP4) occurs in different assemblies of the catalytic and one or more regulatory subunits. Component of the PP4 complex PPP4C-PPP4R1. Interacts with HDAC3.

Its function is as follows. Regulatory subunit of serine/threonine-protein phosphatase 4. May play a role in regulation of cell division in renal glomeruli. The PPP4C-PPP4R1 PP4 complex may play a role in dephosphorylation and regulation of HDAC3. Plays a role in the inhibition of TNF-induced NF-kappa-B activation by regulating the dephosphorylation of TRAF2. The sequence is that of Serine/threonine-protein phosphatase 4 regulatory subunit 1 (Ppp4r1) from Rattus norvegicus (Rat).